A 342-amino-acid chain; its full sequence is Pyridoxal 4-dehydrogenase (342 aa).

D56 is a catalytic residue. The Proton donor role is filled by Y61. K86 is a catalytic residue. 245–255 (GVFNSGILAAP) is a binding site for NADP(+).

Belongs to the aldo/keto reductase family. As to quaternary structure, homodimer.

It catalyses the reaction pyridoxal + NAD(+) = 4-pyridoxolactone + NADH + H(+). It participates in cofactor degradation; B6 vitamer degradation; 4-pyridoxate from pyridoxal: step 1/2. The polypeptide is Pyridoxal 4-dehydrogenase (pld1) (Microbacterium luteolum (Aureobacterium luteolum)).